We begin with the raw amino-acid sequence, 134 residues long: ATP synthase epsilon chain, chloroplastic (134 aa).

Belongs to the ATPase epsilon chain family. As to quaternary structure, F-type ATPases have 2 components, CF(1) - the catalytic core - and CF(0) - the membrane proton channel. CF(1) has five subunits: alpha(3), beta(3), gamma(1), delta(1), epsilon(1). CF(0) has three main subunits: a, b and c.

Its subcellular location is the plastid. It is found in the chloroplast thylakoid membrane. In terms of biological role, produces ATP from ADP in the presence of a proton gradient across the membrane. The sequence is that of ATP synthase epsilon chain, chloroplastic from Phalaenopsis aphrodite subsp. formosana (Moth orchid).